Reading from the N-terminus, the 652-residue chain is Sodium-dependent nutrient amino acid transporter 1 (652 aa).

Residues 1–54 (MELKGVHQQNGTSNGTGAVGAEGESAPPTAPATAEAAASLETTTEKVDAEQQKP) are disordered. The Cytoplasmic portion of the chain corresponds to 1 to 58 (MELKGVHQQNGTSNGTGAVGAEGESAPPTAPATAEAAASLETTTEKVDAEQQKPERTN). Residues 7 to 16 (HQQNGTSNGT) show a composition bias toward polar residues. A compositionally biased stretch (low complexity) spans 21 to 42 (AEGESAPPTAPATAEAAASLET). Over residues 43 to 54 (TTEKVDAEQQKP) the composition is skewed to basic and acidic residues. 4 consecutive transmembrane segments (helical) span residues 59-79 (WGNG…LGNV), 92-112 (GAFL…MYYL), 130-150 (VVPG…CIIT), and 155-175 (LLAL…PWSY). N-linked (GlcNAc...) asparagine glycosylation is found at asparagine 201 and asparagine 204. 9 consecutive transmembrane segments (helical) span residues 240-260 (PDWK…LVIM), 269-289 (AAYF…VRAV), 318-338 (AVVQ…MFAS), 352-372 (IVTT…FAIL), 412-432 (LFSV…IVAL), 458-478 (ICGF…ILTL), 485-505 (TYVV…IYGM), 527-547 (CWSF…MVTI), and 564-584 (AGWL…MWYI).

It belongs to the sodium:neurotransmitter symporter (SNF) (TC 2.A.22) family.

The protein resides in the membrane. Functionally, unusual broad substrate spectrum amino acid:sodium cotransporter that promotes absorption of the D isomers of essential amino acids. Neutral amino acids are the preferred substrates, especially methionine and phenylalanine. In Drosophila persimilis (Fruit fly), this protein is Sodium-dependent nutrient amino acid transporter 1.